Here is a 600-residue protein sequence, read N- to C-terminus: Integrator complex subunit 11 (600 aa).

Zn(2+)-binding residues include histidine 68, histidine 70, aspartate 72, histidine 73, histidine 157, and aspartate 178. The HXHXDH motif signature appears at 68-73 (HFHLDH). Glutamate 203 is a catalytic residue. A Glycyl lysine isopeptide (Lys-Gly) (interchain with G-Cter in SUMO) cross-link involves residue lysine 381. Histidine 414 is a binding site for Zn(2+). Residues lysine 462 and lysine 475 each participate in a glycyl lysine isopeptide (Lys-Gly) (interchain with G-Cter in SUMO) cross-link. A Nuclear localization signal motif is present at residues 469–479 (LLPEAKKPRLL).

The protein belongs to the metallo-beta-lactamase superfamily. RNA-metabolizing metallo-beta-lactamase-like family. INTS11 subfamily. As to quaternary structure, component of the Integrator complex, composed of core subunits INTS1, INTS2, INTS3, INTS4, INTS5, INTS6, INTS7, INTS8, INTS9/RC74, INTS10, INTS11/CPSF3L, INTS12, INTS13, INTS14 and INTS15. The core complex associates with protein phosphatase 2A subunits PPP2CA and PPP2R1A, to form the Integrator-PP2A (INTAC) complex. INTS11 is part of the RNA endonuclease subcomplex, composed of INTS4, INTS9, INTS11 and inositol hexakisphosphate (InsP6). Interacts with WDR73; interaction is required for the assembly of the RNA endonuclease subcomplex in the cytoplasm. Interacts with BRAT1; interaction is required for the assembly of the RNA endonuclease subcomplex and inhibits the endonuclease activity of INTS11 before formation of mature integrator complex. The cofactor is Zn(2+). Post-translationally, sumoylated; sumoylation regulates its subcellular location and is required for integrator complex integrity.

It localises to the nucleus. It is found in the cytoplasm. With respect to regulation, the RNA endonuclease activity is inhibited by BRAT1 that forms hyrogen bond and hydrophobic interactions with the active site. Functionally, RNA endonuclease component of the integrator complex, a multiprotein complex that terminates RNA polymerase II (Pol II) transcription in the promoter-proximal region of genes. The integrator complex provides a quality checkpoint during transcription elongation by driving premature transcription termination of transcripts that are unfavorably configured for transcriptional elongation: the complex terminates transcription by (1) catalyzing dephosphorylation of the C-terminal domain (CTD) of Pol II subunit POLR2A/RPB1 and SUPT5H/SPT5, (2) degrading the exiting nascent RNA transcript via endonuclease activity and (3) promoting the release of Pol II from bound DNA. The integrator complex is also involved in terminating the synthesis of non-coding Pol II transcripts, such as enhancer RNAs (eRNAs), small nuclear RNAs (snRNAs), telomerase RNAs and long non-coding RNAs (lncRNAs). Within the integrator complex, INTS11 constitutes the RNA endonuclease subunit that degrades exiting nascent RNA transcripts. Mediates recruitment of cytoplasmic dynein to the nuclear envelope, probably as component of the integrator complex. This Mus musculus (Mouse) protein is Integrator complex subunit 11.